The sequence spans 304 residues: Acetyl-coenzyme A carboxylase carboxyl transferase subunit beta (304 aa).

Positions 29–298 (LWSKCESCGA…ASDVSPAAVP (270 aa)) constitute a CoA carboxyltransferase N-terminal domain. Zn(2+) is bound by residues C33, C36, C52, and C55. The C4-type zinc finger occupies 33-55 (CESCGALTYTKDLRANQMVCLEC).

This sequence belongs to the AccD/PCCB family. As to quaternary structure, acetyl-CoA carboxylase is a heterohexamer composed of biotin carboxyl carrier protein (AccB), biotin carboxylase (AccC) and two subunits each of ACCase subunit alpha (AccA) and ACCase subunit beta (AccD). The cofactor is Zn(2+).

Its subcellular location is the cytoplasm. It carries out the reaction N(6)-carboxybiotinyl-L-lysyl-[protein] + acetyl-CoA = N(6)-biotinyl-L-lysyl-[protein] + malonyl-CoA. Its pathway is lipid metabolism; malonyl-CoA biosynthesis; malonyl-CoA from acetyl-CoA: step 1/1. In terms of biological role, component of the acetyl coenzyme A carboxylase (ACC) complex. Biotin carboxylase (BC) catalyzes the carboxylation of biotin on its carrier protein (BCCP) and then the CO(2) group is transferred by the transcarboxylase to acetyl-CoA to form malonyl-CoA. The chain is Acetyl-coenzyme A carboxylase carboxyl transferase subunit beta from Acaryochloris marina (strain MBIC 11017).